Consider the following 294-residue polypeptide: Protoheme IX farnesyltransferase (294 aa).

9 helical membrane passes run 13-33 (IIFGNLISVIGGFLLASKGVI), 35-55 (YPLFISTLLGVSLVVASGCVF), 84-104 (ISLIYASILGIAGIVLLYAAA), 107-127 (LAMQLAIIGFVVYVGVYSLYM), 132-152 (VYGTLIGSLSGAAPPVIGYCA), 162-182 (LILLLIFSLWQMPHSYAIAIF), 208-228 (IILYILAFMIATLMLAISGYA), 229-249 (GYKYLVVAAAVSVWWLGMALS), and 264-284 (FIFSIVAITSLSVMMSIDPHV).

Belongs to the UbiA prenyltransferase family. Protoheme IX farnesyltransferase subfamily.

It localises to the cell inner membrane. It catalyses the reaction heme b + (2E,6E)-farnesyl diphosphate + H2O = Fe(II)-heme o + diphosphate. It functions in the pathway porphyrin-containing compound metabolism; heme O biosynthesis; heme O from protoheme: step 1/1. Converts heme B (protoheme IX) to heme O by substitution of the vinyl group on carbon 2 of heme B porphyrin ring with a hydroxyethyl farnesyl side group. This is Protoheme IX farnesyltransferase from Photorhabdus laumondii subsp. laumondii (strain DSM 15139 / CIP 105565 / TT01) (Photorhabdus luminescens subsp. laumondii).